The following is a 167-amino-acid chain: Ribosome rescue factor SmrB (167 aa).

In terms of domain architecture, Smr spans 91-166 (LDLHGLTREQ…GEAAILILVD (76 aa)).

It belongs to the SmrB family. As to quaternary structure, associates with collided ribosomes, but not with correctly translating polysomes.

Its function is as follows. Acts as a ribosome collision sensor. Detects stalled/collided disomes (pairs of ribosomes where the leading ribosome is stalled and a second ribosome has collided with it) and endonucleolytically cleaves mRNA at the 5' boundary of the stalled ribosome. Stalled/collided disomes form a new interface (primarily via the 30S subunits) that binds SmrB. Cleaved mRNA becomes available for tmRNA ligation, leading to ribosomal subunit dissociation and rescue of stalled ribosomes. In Haemophilus influenzae (strain ATCC 51907 / DSM 11121 / KW20 / Rd), this protein is Ribosome rescue factor SmrB.